Reading from the N-terminus, the 883-residue chain is Aldehyde-alcohol dehydrogenase (883 aa).

An aldehyde dehydrogenase region spans residues 13 to 456 (KLVAEKHVDE…DNVSAINLLN (444 aa)). NAD(+)-binding positions include 121–126 (ITPTTN), G206, and G224. C257 (nucleophile) is an active-site residue. NAD(+)-binding positions include E355, L435, and 438–443 (GSYGRN). Positions 457–464 (IKKVGRRR) are linker. NAD(+)-binding positions include D500, D534, 561–565 (GSPMD), 612–613 (TT), V625, K634, and L653. 4 residues coordinate Fe cation: D668, H672, H736, and H750.

This sequence in the N-terminal section; belongs to the aldehyde dehydrogenase family. In the C-terminal section; belongs to the iron-containing alcohol dehydrogenase family. The cofactor is Fe(2+).

It carries out the reaction ethanol + NAD(+) = acetaldehyde + NADH + H(+). The enzyme catalyses an aldehyde + NAD(+) + H2O = a carboxylate + NADH + 2 H(+). Its function is as follows. Has alcohol dehydrogenase activity. Has aldehyde dehydrogenase activity. May play a role in enhancing virulence in mice. May be considered a potential virulence factor. This chain is Aldehyde-alcohol dehydrogenase, found in Streptococcus pneumoniae serotype 4 (strain ATCC BAA-334 / TIGR4).